Here is a 188-residue protein sequence, read N- to C-terminus: Pyridoxal 5'-phosphate synthase subunit PdxT (188 aa).

47–49 (GES) is a binding site for L-glutamine. Cysteine 79 acts as the Nucleophile in catalysis. L-glutamine is bound by residues arginine 105 and 134–135 (IR). Catalysis depends on charge relay system residues histidine 170 and glutamate 172.

The protein belongs to the glutaminase PdxT/SNO family. In the presence of PdxS, forms a dodecamer of heterodimers. Only shows activity in the heterodimer.

It carries out the reaction aldehydo-D-ribose 5-phosphate + D-glyceraldehyde 3-phosphate + L-glutamine = pyridoxal 5'-phosphate + L-glutamate + phosphate + 3 H2O + H(+). It catalyses the reaction L-glutamine + H2O = L-glutamate + NH4(+). It participates in cofactor biosynthesis; pyridoxal 5'-phosphate biosynthesis. Functionally, catalyzes the hydrolysis of glutamine to glutamate and ammonia as part of the biosynthesis of pyridoxal 5'-phosphate. The resulting ammonia molecule is channeled to the active site of PdxS. This is Pyridoxal 5'-phosphate synthase subunit PdxT from Listeria innocua serovar 6a (strain ATCC BAA-680 / CLIP 11262).